We begin with the raw amino-acid sequence, 316 residues long: L-lactate dehydrogenase (316 aa).

Residues Met14, 14-150, Ile15, Asp35, Tyr67, Gly81, Phe82, Val125, Asn127, and Leu150 each bind NAD(+); that span reads MIGG…IIGL. Position 95 (Arg95) interacts with substrate. Positions 158 and 182 each coordinate substrate. His182 serves as the catalytic Proton acceptor.

This sequence belongs to the LDH/MDH superfamily. LDH family. In terms of assembly, homotetramer.

The catalysed reaction is (S)-lactate + NAD(+) = pyruvate + NADH + H(+). The protein operates within fermentation; pyruvate fermentation to lactate; (S)-lactate from pyruvate: step 1/1. This is L-lactate dehydrogenase from Plasmodium falciparum (isolate CDC / Honduras).